Here is a 923-residue protein sequence, read N- to C-terminus: DNA mismatch repair protein PMS1 (923 aa).

3 stretches are compositionally biased toward basic and acidic residues: residues 543–553 (DMTPSERDSEL), 565–581 (NVER…RFEE), and 591–601 (GDVERVSEDNP). The disordered stretch occupies residues 543 to 603 (DMTPSERDSE…ERVSEDNPRC (61 aa)).

The protein belongs to the DNA mismatch repair MutL/HexB family. Heterodimer of MLH1 and PMS1, called MutLalpha, which is the major MMR MutL activity correcting base-base mismatches as well as IDLs. The heterodimer binds double strand DNA independently of a mismatch with positive cooperativity and has more than one DNA binding site. Forms a ternary complex with either the MSH2-MSH6 (MutSalpha) or the MSH2-MSH3 heterodimer (MutSbeta), which recognize and bind to mismatch DNA. Ternary complex formation is promoted by ATP binding. As to expression, expressed at very low levels in mature leaves. Detected in rapidly dividing tissues.

It localises to the nucleus. Required for DNA mismatch repair (MMR), correcting base-base mismatches and insertion-deletion loops (IDLs) resulting from DNA replication, DNA damage or from recombination events between non-identical sequences during meiosis. Component of the MutLalpha heterodimer that forms a ternary complex with the MutS heterodimers, which initially recognize the DNA mismatches. This complex is thought to be responsible for directing the downstream MMR events, including strand discrimination, excision, and resynthesis. Plays a major role in maintaining the genetic stability of simple sequence repeats and in the repair of heteroduplex sites present in meiotic recombination intermediates. Does not seem to be required for homologous somatic recombination. This chain is DNA mismatch repair protein PMS1 (PMS1), found in Arabidopsis thaliana (Mouse-ear cress).